The following is a 93-amino-acid chain: UPF0147 protein PF0239 (93 aa).

It belongs to the UPF0147 family.

In Pyrococcus furiosus (strain ATCC 43587 / DSM 3638 / JCM 8422 / Vc1), this protein is UPF0147 protein PF0239.